A 285-amino-acid polypeptide reads, in one-letter code: HTH-type transcriptional regulator MurR (285 aa).

The HTH rpiR-type domain maps to 1–77 (MLYLTKIRNA…MALIGEYSAS (77 aa)). A DNA-binding region (H-T-H motif) is located at residues 37 to 56 (SRKMAKLLGISQSSIVKFAQ). The SIS domain maps to 128–268 (IIEAISKAPF…FVGLVQLNDV (141 aa)).

As to quaternary structure, homotetramer.

Its pathway is amino-sugar metabolism; N-acetylmuramate degradation [regulation]. In terms of biological role, represses the expression of the murPQ operon involved in the uptake and degradation of N-acetylmuramic acid (MurNAc). Binds to two adjacent inverted repeats within the operator region. MurNAc 6-phosphate, the substrate of MurQ, is the specific inducer that weakens binding of MurR to the operator. This chain is HTH-type transcriptional regulator MurR, found in Escherichia coli O17:K52:H18 (strain UMN026 / ExPEC).